The sequence spans 823 residues: DNA ligase (823 aa).

NAD(+) contacts are provided by residues 31 to 35 (DDAFD) and 73 to 74 (SQ). The active-site N6-AMP-lysine intermediate is lysine 100. NAD(+)-binding residues include arginine 121, glutamate 163, lysine 275, and lysine 296. 4 residues coordinate Zn(2+): cysteine 387, cysteine 390, cysteine 403, and cysteine 408. BRCT domains are found at residues 562–655 (QAES…TGET), 654–742 (ETVH…DAHV), and 741–823 (HVHA…TPGT).

Belongs to the NAD-dependent DNA ligase family. LigA subfamily. Mg(2+) serves as cofactor. The cofactor is Mn(2+).

It catalyses the reaction NAD(+) + (deoxyribonucleotide)n-3'-hydroxyl + 5'-phospho-(deoxyribonucleotide)m = (deoxyribonucleotide)n+m + AMP + beta-nicotinamide D-nucleotide.. Functionally, DNA ligase that catalyzes the formation of phosphodiester linkages between 5'-phosphoryl and 3'-hydroxyl groups in double-stranded DNA using NAD as a coenzyme and as the energy source for the reaction. It is essential for DNA replication and repair of damaged DNA. This chain is DNA ligase, found in Treponema pallidum (strain Nichols).